The primary structure comprises 335 residues: MRN complex-interacting protein (335 aa).

2 disordered regions span residues Glu75–Pro102 and Gln118–Thr194. A Phosphoserine modification is found at Ser100. The segment covering Thr129 to Ala142 has biased composition (polar residues). The Nuclear localization signal (NLS) signature appears at Arg145 to Lys148. Positions Ser177–Thr194 are enriched in polar residues. The necessary for the association with the MRN complex stretch occupies residues Phe203 to Gly230. Residues Arg273–Leu335 form a disordered region. The span at Asp286 to Arg297 shows a compositional bias: basic and acidic residues.

Belongs to the MRNIP family. Associates with the MRE11-RAD50-NBN (MRN) damage-sensing complex; this association is constitutive. Interacts with MRE11. Interacts with NBN. Interacts with RAD50. Phosphorylated; phosphorylation is constitutive and occurs in the absence of any DNA-damaging stimulus. Phosphorylation is necessary for its nuclear retention.

It is found in the nucleus. Its subcellular location is the nucleoplasm. Functionally, plays a role in the cellular response to DNA damage and the maintenance of genome stability through its association with the MRN damage-sensing complex. Promotes chromatin loading and activity of the MRN complex to facilitate subsequent ATM-mediated DNA damage response signaling and DNA repair. The sequence is that of MRN complex-interacting protein from Mus musculus (Mouse).